The chain runs to 1066 residues: FHIP family protein GH13096 (1066 aa).

Positions 1 to 15 are enriched in polar residues; that stretch reads MSWLRTSPLRQSLTR. Residues 1–33 are disordered; it reads MSWLRTSPLRQSLTRNSGGNGSGGSGNSGNASA. The span at 18 to 27 shows a compositional bias: gly residues; that stretch reads GGNGSGGSGN. Ser-512 is subject to Phosphoserine. 3 disordered regions span residues 647–688, 827–885, and 942–1010; these read SFKW…NSSG, DNSP…RSDN, and SRGV…FNSE. Over residues 658–687 the composition is skewed to low complexity; the sequence is NDATTTTATSDPDVEHNNSSNHNNSSINSS. Ser-829 carries the post-translational modification Phosphoserine. The segment covering 836-856 has biased composition (low complexity); it reads HQQQQLQHTTNSTHQQQQAQQ. Polar residues predominate over residues 950-963; the sequence is PRGNTCETSLSTTP. Residues 967-996 show a composition bias toward low complexity; sequence AQATSASSTNSSIGGSTQTLSATHSSSTLH. A compositionally biased stretch (polar residues) spans 1001–1010; it reads GPQTASFNSE.

This sequence belongs to the FHIP family.

This Drosophila grimshawi (Hawaiian fruit fly) protein is FHIP family protein GH13096.